The following is a 475-amino-acid chain: FAD-dependent monooxygenase penE (475 aa).

The FAD site is built by Glu35, Gly49, and Arg108. Tyr216 is an active-site residue. Positions 308 and 321 each coordinate FAD. The N-linked (GlcNAc...) asparagine glycan is linked to Asn437. The helical transmembrane segment at 446–466 threads the bilayer; that stretch reads WGSIWLSPVILCLFCMLFLWP.

It belongs to the paxM FAD-dependent monooxygenase family. FAD serves as cofactor.

The protein resides in the membrane. The enzyme catalyses [(1'E)-3'-hydroxy-3',7'-dimethylocta-1',6'-dien-1'-yl]-quinolinone B + NADPH + O2 + H(+) = [(1'E)-5'-(3',3'-dimethyloxiran-2'-yl)-3'-hydroxy-3'-methylpent-1'-en-1'-yl]-quinolinone B + NADP(+) + H2O. Its pathway is secondary metabolite biosynthesis. The protein operates within alkaloid biosynthesis. It functions in the pathway mycotoxin biosynthesis. Functionally, FAD-dependent monooxygenase; part of the gene cluster that mediates the biosynthesis of penigequinolones, potent insecticidal alkaloids that contain a highly modified 10-carbon prenyl group. The first stage is catalyzed by the nonribosomal peptide synthetase penN that condenses anthranilic acid and O-methyl-L-tyrosine to produce 4'-methoxycyclopeptin. 4'-methoxycyclopeptin is then converted to 4'-methoxydehydrocyclopeptin by the ketoglutarate-dependent dioxygenase penM through dehydrogenation to form a double bond between C-alpha and C-beta of the O-methyltyrosine side chain. PenM also converts its first product methoxydehydrocyclopeptin to 4'-methoxycyclopenin. The following conversion of 4'methoxycyclopenin into 4'-methoxyviridicatin is catalyzed by the cyclopenase penL. 4'-methoxyviridicatin is the precursor of quinolone natural products, and is further converted to quinolinone B. The prenyltransferase penI then catalyzes the canonical Friedel-Crafts alkylation of quinolinone B with dimethylallyl cation to yield dimethylallyl quinolone, which is subjected to FAD-dependent dehydrogenation by the FAD-linked oxidoreductase penH to yield conjugated aryl diene. The delta(3') double bond then serves as the site of the second alkylation with DMAPP catalyzed by the prenyltransferase penG to yield a carbenium ion intermediate, which can be attacked by H(2)O to yield a styrenyl quinolone containing a C3'-hydroxyprenyl chain, or undergo cyclization to yield yaequinolones J1 and J2. The conversion of the styrenyl quinolone into the tetrahydrofuran-containing yaequinolone C is performed by the FAD-dependent monooxygenase penE and involves epoxidation of the terminal C7'-C8' olefin, followed by epoxide ring opening initiated by the C3' hydroxyl group. The predicted cysteine hydrolase penJ acts as an epoxide hydrolase that enhances the rate of the 5-exo-tet cyclization step, increasing the yield of yaequinolone C. PenF catalyzes the cationic rearrangement of the epoxide formed by penE (before ring opening to produce yaequinolone C) into yaequinolone D. Finally, the short-chain dehydrogenase/reductase (SDR)-like reductase penD, catalyzes both the dehydration of yaequinolone D and the reduction of the resulting oxonium to yield penigequinolone. The chain is FAD-dependent monooxygenase penE from Penicillium thymicola.